The primary structure comprises 228 residues: 2-phospho-L-lactate guanylyltransferase (228 aa).

This sequence belongs to the CofC family. In terms of assembly, homodimer.

It catalyses the reaction (2S)-2-phospholactate + GTP + H(+) = (2S)-lactyl-2-diphospho-5'-guanosine + diphosphate. It participates in cofactor biosynthesis; coenzyme F420 biosynthesis. In terms of biological role, guanylyltransferase that catalyzes the activation of (2S)-2-phospholactate (2-PL) as (2S)-lactyl-2-diphospho-5'-guanosine, via the condensation of 2-PL with GTP. It is involved in the biosynthesis of coenzyme F420, a hydride carrier cofactor. This is 2-phospho-L-lactate guanylyltransferase from Methanosphaera stadtmanae (strain ATCC 43021 / DSM 3091 / JCM 11832 / MCB-3).